The following is a 219-amino-acid chain: Thiamine-phosphate synthase (219 aa).

4-amino-2-methyl-5-(diphosphooxymethyl)pyrimidine contacts are provided by residues 44 to 48 (QFREK) and Asn-79. 2 residues coordinate Mg(2+): Asp-80 and Asp-99. 4-amino-2-methyl-5-(diphosphooxymethyl)pyrimidine is bound at residue Ser-117. 143–145 (TST) contributes to the 2-[(2R,5Z)-2-carboxy-4-methylthiazol-5(2H)-ylidene]ethyl phosphate binding site. Residue Lys-146 participates in 4-amino-2-methyl-5-(diphosphooxymethyl)pyrimidine binding. 2-[(2R,5Z)-2-carboxy-4-methylthiazol-5(2H)-ylidene]ethyl phosphate is bound by residues Gly-175 and 195-196 (IS).

The protein belongs to the thiamine-phosphate synthase family. Requires Mg(2+) as cofactor.

It catalyses the reaction 2-[(2R,5Z)-2-carboxy-4-methylthiazol-5(2H)-ylidene]ethyl phosphate + 4-amino-2-methyl-5-(diphosphooxymethyl)pyrimidine + 2 H(+) = thiamine phosphate + CO2 + diphosphate. It carries out the reaction 2-(2-carboxy-4-methylthiazol-5-yl)ethyl phosphate + 4-amino-2-methyl-5-(diphosphooxymethyl)pyrimidine + 2 H(+) = thiamine phosphate + CO2 + diphosphate. The catalysed reaction is 4-methyl-5-(2-phosphooxyethyl)-thiazole + 4-amino-2-methyl-5-(diphosphooxymethyl)pyrimidine + H(+) = thiamine phosphate + diphosphate. It participates in cofactor biosynthesis; thiamine diphosphate biosynthesis; thiamine phosphate from 4-amino-2-methyl-5-diphosphomethylpyrimidine and 4-methyl-5-(2-phosphoethyl)-thiazole: step 1/1. Its function is as follows. Condenses 4-methyl-5-(beta-hydroxyethyl)thiazole monophosphate (THZ-P) and 2-methyl-4-amino-5-hydroxymethyl pyrimidine pyrophosphate (HMP-PP) to form thiamine monophosphate (TMP). This chain is Thiamine-phosphate synthase, found in Bacillus cereus (strain 03BB102).